The following is a 342-amino-acid chain: Succinylglutamate desuccinylase (342 aa).

H63, E66, and H155 together coordinate Zn(2+). E219 is an active-site residue.

Belongs to the AspA/AstE family. Succinylglutamate desuccinylase subfamily. The cofactor is Zn(2+).

It carries out the reaction N-succinyl-L-glutamate + H2O = L-glutamate + succinate. It functions in the pathway amino-acid degradation; L-arginine degradation via AST pathway; L-glutamate and succinate from L-arginine: step 5/5. In terms of biological role, transforms N(2)-succinylglutamate into succinate and glutamate. The sequence is that of Succinylglutamate desuccinylase from Vibrio vulnificus (strain CMCP6).